Here is a 269-residue protein sequence, read N- to C-terminus: 4-hydroxy-tetrahydrodipicolinate reductase (269 aa).

Residues 8–13 (GAAGRM) and glutamate 34 contribute to the NAD(+) site. An NADP(+)-binding site is contributed by arginine 35. Residues 98-100 (GTT) and 122-125 (APNY) each bind NAD(+). Residue histidine 155 is the Proton donor/acceptor of the active site. Histidine 156 is a binding site for (S)-2,3,4,5-tetrahydrodipicolinate. Catalysis depends on lysine 159, which acts as the Proton donor. Residue 165–166 (GT) participates in (S)-2,3,4,5-tetrahydrodipicolinate binding.

Belongs to the DapB family.

The protein localises to the cytoplasm. It carries out the reaction (S)-2,3,4,5-tetrahydrodipicolinate + NAD(+) + H2O = (2S,4S)-4-hydroxy-2,3,4,5-tetrahydrodipicolinate + NADH + H(+). The enzyme catalyses (S)-2,3,4,5-tetrahydrodipicolinate + NADP(+) + H2O = (2S,4S)-4-hydroxy-2,3,4,5-tetrahydrodipicolinate + NADPH + H(+). Its pathway is amino-acid biosynthesis; L-lysine biosynthesis via DAP pathway; (S)-tetrahydrodipicolinate from L-aspartate: step 4/4. Its function is as follows. Catalyzes the conversion of 4-hydroxy-tetrahydrodipicolinate (HTPA) to tetrahydrodipicolinate. The chain is 4-hydroxy-tetrahydrodipicolinate reductase from Vibrio vulnificus (strain YJ016).